A 121-amino-acid polypeptide reads, in one-letter code: uncharacterized protein (121 aa).

Disordered regions lie at residues Ser24 to Gly43 and Asp100 to Arg121.

This is an uncharacterized protein from Homo sapiens (Human).